Consider the following 1469-residue polypeptide: Chromosome condensation protein dpy-27 (1469 aa).

Residues Met-1–Glu-25 are disordered. The segment covering Leu-9–Ala-18 has biased composition (basic and acidic residues). Gly-122–Ser-129 is an ATP binding site. The stretch at Glu-356–Glu-542 forms a coiled coil. The region spanning Pro-621–Ile-736 is the SMC hinge domain. Residues Gly-758–Gly-781 are disordered. 3 coiled-coil regions span residues Leu-805–Glu-974, Ala-1016–Glu-1056, and Thr-1159–Arg-1182. The interval Leu-1404–His-1469 is disordered. Residues Glu-1439 to Glu-1449 are compositionally biased toward acidic residues.

It belongs to the SMC family. SMC4 subfamily. As to quaternary structure, component of the dosage compensation complex, which contains the mix-1/SMC2 and dpy-27/SMC4 heterodimer, and three non SMC subunits that probably regulate the complex: dpy-26, capg-1 and dpy-28. Within the complex, interacts with dpy-28, mix-1, dpy-26 and capg-1. Interacts with dpy-21. Interacts with dpy-28; the interaction is required for dpy-28 protein stability and dpy-28 association with the X chromosome. Interacts with smcl-1.

It is found in the nucleus. The protein localises to the chromosome. Central component of the condensin I-like dosage compensation complex that associates specifically with hermaphrodite X chromosomes to reduce their gene transcription throughout development. Its strong similarity with the condensin subunit smc4 suggests that it may reduce the X-chromosome transcript level by condensing the chromatin structure during interphase. Involved in the recruitment of the dosage compensation proteins mix-1 and dpy-21 to the X chromosome. Might be involved in the reduction of histone H4 lysine 16 acetylation (H4K16ac) on dosage compensated X chromosomes. As a member of the dosage compensation complex, also binds to regulatory regions of the autosomal her-1 gene, required for male development, possibly contributing to its repression in hermaphrodites. Also plays a role in the regulation of growth and body fat metabolism downstream of the TOR complex 2 pathway. This is Chromosome condensation protein dpy-27 (dpy-27) from Caenorhabditis elegans.